The chain runs to 876 residues: Exonuclease mut-7 homolog (876 aa).

The region spanning Gly-517–Ala-571 is the 3'-5' exonuclease domain. Disordered stretches follow at residues Asp-578–Ala-607 and Ser-751–Glu-781.

This sequence belongs to the mut-7 family. The cofactor is Mg(2+).

Its function is as follows. Possesses 3'-5' exoribonuclease activity. Required for 3'-end trimming of AGO1-bound miRNAs. This Homo sapiens (Human) protein is Exonuclease mut-7 homolog (EXD3).